Consider the following 557-residue polypeptide: Anthrax toxin receptor-like (557 aa).

An N-terminal signal peptide occupies residues 1–25 (MRSHGRWGPCFLLFLLLLPPPLFRA). Over 26–345 (GSLRYHGPGW…KSNVSVTSST (320 aa)) the chain is Extracellular. The VWFA domain occupies 74–244 (DLYFILDKSG…KAMRDTVDAL (171 aa)). A divalent metal cation contacts are provided by Ser-82, Ser-84, and Thr-148. A helical transmembrane segment spans residues 346 to 366 (CGIFSNWLYFLLPLLLLPLLL). The Cytoplasmic segment spans residues 367–557 (CCLWRLCRKK…PTSKAPNTQD (191 aa)). 2 disordered regions span residues 380–411 (EPPP…LPPP) and 497–557 (ESPS…NTQD). The span at 386 to 395 (KPEKEPEQEK) shows a compositional bias: basic and acidic residues. A compositionally biased stretch (pro residues) spans 396 to 411 (PPPPPPPSPPPPLPPP). Over residues 534 to 557 (GTLQNPLCPSLPRSPTSKAPNTQD) the composition is skewed to polar residues.

The protein belongs to the ATR family.

It localises to the membrane. The protein is Anthrax toxin receptor-like (ANTXRL) of Macaca fascicularis (Crab-eating macaque).